We begin with the raw amino-acid sequence, 206 residues long: Small ribosomal subunit protein uS4A (206 aa).

The region spanning 98–164 (LRLDNVAYKL…EKFKTFAENP (67 aa)) is the S4 RNA-binding domain.

It belongs to the universal ribosomal protein uS4 family. As to quaternary structure, part of the 30S ribosomal subunit. Contacts protein S5. The interaction surface between S4 and S5 is involved in control of translational fidelity.

In terms of biological role, one of the primary rRNA binding proteins, it binds directly to 16S rRNA where it nucleates assembly of the body of the 30S subunit. Functionally, with S5 and S12 plays an important role in translational accuracy. In Clostridium acetobutylicum (strain ATCC 824 / DSM 792 / JCM 1419 / IAM 19013 / LMG 5710 / NBRC 13948 / NRRL B-527 / VKM B-1787 / 2291 / W), this protein is Small ribosomal subunit protein uS4A (rspD1).